A 394-amino-acid polypeptide reads, in one-letter code: Putative FNIP repeat-containing protein R636 (394 aa).

FNIP repeat units lie at residues 126-167 (FNKS…FSVY), 168-207 (FDQPVVGYLPTRLTHLIFGTDFNQPIKGALPDTLEYLYFG), and 210-250 (FNQP…IFEA).

In Acanthamoeba polyphaga mimivirus (APMV), this protein is Putative FNIP repeat-containing protein R636.